We begin with the raw amino-acid sequence, 711 residues long: Catalase HPII (711 aa).

A compositionally biased stretch (basic and acidic residues) spans 1-10 (MPSKKTDAPK). A disordered region spans residues 1–27 (MPSKKTDAPKQSEAAGTQTPDRANTNA). The segment covering 14 to 27 (AAGTQTPDRANTNA) has biased composition (polar residues). Active-site residues include H92 and N165. Heme is bound at residue Y379.

This sequence belongs to the catalase family. HPII subfamily. Requires heme as cofactor.

It localises to the cytoplasm. It carries out the reaction 2 H2O2 = O2 + 2 H2O. Its function is as follows. Decomposes hydrogen peroxide into water and oxygen; serves to protect cells from the toxic effects of hydrogen peroxide. This is Catalase HPII (katE) from Pseudomonas putida (Arthrobacter siderocapsulatus).